The sequence spans 32 residues: Photosystem II reaction center protein Z (32 aa).

Residues phenylalanine 9–valine 31 form a helical membrane-spanning segment.

Belongs to the PsbZ family. As to quaternary structure, PSII is composed of 1 copy each of membrane proteins PsbA, PsbB, PsbC, PsbD, PsbE, PsbF, PsbH, PsbI, PsbJ, PsbK, PsbL, PsbM, PsbT, PsbY, PsbZ, Psb30/Ycf12, at least 3 peripheral proteins of the oxygen-evolving complex and a large number of cofactors. It forms dimeric complexes.

It localises to the plastid. The protein resides in the chloroplast thylakoid membrane. Its function is as follows. May control the interaction of photosystem II (PSII) cores with the light-harvesting antenna, regulates electron flow through the 2 photosystem reaction centers. PSII is a light-driven water plastoquinone oxidoreductase, using light energy to abstract electrons from H(2)O, generating a proton gradient subsequently used for ATP formation. In Euglena viridis (Cercaria viridis), this protein is Photosystem II reaction center protein Z.